The sequence spans 350 residues: Serine/threonine-protein kinase SRK2F (350 aa).

One can recognise a Protein kinase domain in the interval 4–260 (YDILRDLGSG…VPEIEKHPWF (257 aa)). ATP contacts are provided by residues 10 to 18 (LGSGNFGVA) and Lys33. The active-site Proton acceptor is Asp123. The stretch at 270 to 303 (EEEKCDNGVEEEEEEEEKCRQSVEEIVKIIEEAR) forms a coiled coil.

This sequence belongs to the protein kinase superfamily. Ser/Thr protein kinase family. Expressed in seedlings.

The enzyme catalyses L-seryl-[protein] + ATP = O-phospho-L-seryl-[protein] + ADP + H(+). It catalyses the reaction L-threonyl-[protein] + ATP = O-phospho-L-threonyl-[protein] + ADP + H(+). The chain is Serine/threonine-protein kinase SRK2F (SRK2F) from Arabidopsis thaliana (Mouse-ear cress).